Reading from the N-terminus, the 283-residue chain is Nucleoid occlusion protein (283 aa).

A DNA-binding region (H-T-H motif) is located at residues 148–167 (EALAQRLGKGQSTIANKLRL).

Belongs to the ParB family.

It is found in the cytoplasm. The protein resides in the nucleoid. Its function is as follows. Effects nucleoid occlusion by binding relatively nonspecifically to DNA and preventing the assembly of the division machinery in the vicinity of the nucleoid, especially under conditions that disturb the cell cycle. It helps to coordinate cell division and chromosome segregation by preventing the formation of the Z ring through the nucleoid, which would cause chromosome breakage. The protein is Nucleoid occlusion protein of Bacillus licheniformis (strain ATCC 14580 / DSM 13 / JCM 2505 / CCUG 7422 / NBRC 12200 / NCIMB 9375 / NCTC 10341 / NRRL NRS-1264 / Gibson 46).